Consider the following 237-residue polypeptide: Ribosomal RNA small subunit methyltransferase G (237 aa).

S-adenosyl-L-methionine contacts are provided by residues Gly78, Phe83, 129 to 130 (AE), and Arg148. The tract at residues 218-237 (KKETPNKYPRKAGMPNKRPL) is disordered.

Belongs to the methyltransferase superfamily. RNA methyltransferase RsmG family.

It localises to the cytoplasm. Functionally, specifically methylates the N7 position of a guanine in 16S rRNA. In Streptococcus gordonii (strain Challis / ATCC 35105 / BCRC 15272 / CH1 / DL1 / V288), this protein is Ribosomal RNA small subunit methyltransferase G.